Reading from the N-terminus, the 305-residue chain is Methionyl-tRNA formyltransferase (305 aa).

Residue 108–111 (SLLP) coordinates (6S)-5,6,7,8-tetrahydrofolate.

Belongs to the Fmt family.

It catalyses the reaction L-methionyl-tRNA(fMet) + (6R)-10-formyltetrahydrofolate = N-formyl-L-methionyl-tRNA(fMet) + (6S)-5,6,7,8-tetrahydrofolate + H(+). Attaches a formyl group to the free amino group of methionyl-tRNA(fMet). The formyl group appears to play a dual role in the initiator identity of N-formylmethionyl-tRNA by promoting its recognition by IF2 and preventing the misappropriation of this tRNA by the elongation apparatus. The chain is Methionyl-tRNA formyltransferase from Thermus thermophilus (strain ATCC 27634 / DSM 579 / HB8).